An 87-amino-acid chain; its full sequence is Potassium channel toxin Tdi-beta-KTx (87 aa).

Positions 1 to 19 are cleaved as a signal peptide; that stretch reads MERKLALLLLLGMITLASS. Residues 20–27 constitute a propeptide that is removed on maturation; that stretch reads GLREKHVQ. Residues 53–87 form the BetaSPN-type CS-alpha/beta domain; that stretch reads QFGCPAYEGYCMNHCQDIERHDGSCHGFKCKCEKS. 3 disulfide bridges follow: cysteine 56–cysteine 77, cysteine 63–cysteine 82, and cysteine 67–cysteine 84.

As to expression, expressed by the venom gland.

Its subcellular location is the secreted. Functionally, inhibits voltage-gated potassium channel. In Tityus discrepans (Venezuelan scorpion), this protein is Potassium channel toxin Tdi-beta-KTx.